Reading from the N-terminus, the 418-residue chain is MSDSALLNCRQLVTLAGPPGPRTGPAMRELAIIPDGAMRIRDGCIAAVGPRADIVRSLAGDTEVIDAGWRVVLPGFIDAHTHPVFAGTRAAEYEQRAEGATYAEIAAAGGGIRSTVRRTREAGDLELATAARRYTDWFLRGGTTTIEAKSGYGLSLDDELRILKTIRLLNAERRLRYVPTFLGAHEIPDEYRGEIEDYVDLVIQEMLPAVAEDNLAEYCDVFCEPNVFPLDPARAILQAAQSLGLRLRIHADQFTGDYAALLAAELGAATADHLESTTALGLAALHEAGVQPVLLPASVYNLGSARYPAARDMIARGMAVVLATDFNPGSSPTASIPMVLSLASTQMKMTPAESITAVTVNAAHSLGRGSRIGSLEPGKAADFAIHECDDYRELAYFFGREPANAVYLAGQCVYRRSA.

Residues histidine 80 and histidine 82 each contribute to the Fe(3+) site. Zn(2+) contacts are provided by histidine 80 and histidine 82. 4-imidazolone-5-propanoate-binding residues include arginine 89, tyrosine 152, and histidine 185. Tyrosine 152 is an N-formimidoyl-L-glutamate binding site. Fe(3+) is bound at residue histidine 250. Histidine 250 lines the Zn(2+) pocket. Glutamine 253 is a 4-imidazolone-5-propanoate binding site. Residue aspartate 325 participates in Fe(3+) binding. Residue aspartate 325 coordinates Zn(2+). The N-formimidoyl-L-glutamate site is built by asparagine 327 and glycine 329. Residue serine 330 participates in 4-imidazolone-5-propanoate binding.

The protein belongs to the metallo-dependent hydrolases superfamily. HutI family. Requires Zn(2+) as cofactor. It depends on Fe(3+) as a cofactor.

Its subcellular location is the cytoplasm. The catalysed reaction is 4-imidazolone-5-propanoate + H2O = N-formimidoyl-L-glutamate. It functions in the pathway amino-acid degradation; L-histidine degradation into L-glutamate; N-formimidoyl-L-glutamate from L-histidine: step 3/3. In terms of biological role, catalyzes the hydrolytic cleavage of the carbon-nitrogen bond in imidazolone-5-propanoate to yield N-formimidoyl-L-glutamate. It is the third step in the universal histidine degradation pathway. This chain is Imidazolonepropionase, found in Solibacter usitatus (strain Ellin6076).